The chain runs to 94 residues: Integration host factor subunit beta (94 aa).

It belongs to the bacterial histone-like protein family. As to quaternary structure, heterodimer of an alpha and a beta chain.

In terms of biological role, this protein is one of the two subunits of integration host factor, a specific DNA-binding protein that functions in genetic recombination as well as in transcriptional and translational control. The sequence is that of Integration host factor subunit beta from Azorhizobium caulinodans (strain ATCC 43989 / DSM 5975 / JCM 20966 / LMG 6465 / NBRC 14845 / NCIMB 13405 / ORS 571).